A 565-amino-acid chain; its full sequence is Arginine--tRNA ligase (565 aa).

Positions 121 to 131 (PNIAKPMGMGH) match the 'HIGH' region motif.

It belongs to the class-I aminoacyl-tRNA synthetase family. In terms of assembly, monomer.

It is found in the cytoplasm. It catalyses the reaction tRNA(Arg) + L-arginine + ATP = L-arginyl-tRNA(Arg) + AMP + diphosphate. The protein is Arginine--tRNA ligase of Lactobacillus delbrueckii subsp. bulgaricus (strain ATCC BAA-365 / Lb-18).